A 171-amino-acid polypeptide reads, in one-letter code: UPF0303 protein YPTS_2661 (171 aa).

It belongs to the UPF0303 family.

The sequence is that of UPF0303 protein YPTS_2661 from Yersinia pseudotuberculosis serotype IB (strain PB1/+).